The primary structure comprises 331 residues: UDP-GalNAc:beta-1,3-N-acetylgalactosaminyltransferase 1 (331 aa).

Residues 1–20 (MASALWTVLPSRMSLRSLQW) lie on the Cytoplasmic side of the membrane. Residues 21-43 (SLLLLSLLSFLVMWYLSLPHYNV) traverse the membrane as a helical; Signal-anchor for type II membrane protein segment. Topologically, residues 44–331 (IERVNWMYFY…VMLRNTTCHY (288 aa)) are lumenal. Residues asparagine 72, asparagine 154, asparagine 198, asparagine 212, and asparagine 326 are each glycosylated (N-linked (GlcNAc...) asparagine).

The protein belongs to the glycosyltransferase 31 family. Mg(2+) serves as cofactor.

It is found in the golgi apparatus membrane. The catalysed reaction is a globoside Gb3Cer (d18:1(4E)) + UDP-N-acetyl-alpha-D-galactosamine = a globoside Gb4Cer (d18:1(4E)) + UDP + H(+). Its pathway is protein modification; protein glycosylation. Its function is as follows. Transfers N-acetylgalactosamine onto globotriaosylceramide. Plays a critical role in preimplantation stage embryonic development. This chain is UDP-GalNAc:beta-1,3-N-acetylgalactosaminyltransferase 1 (B3GALNT1), found in Pongo abelii (Sumatran orangutan).